Reading from the N-terminus, the 549-residue chain is Hydroxylamine reductase (549 aa).

Residues cysteine 5, cysteine 8, cysteine 17, and cysteine 23 each contribute to the [4Fe-4S] cluster site. Residues histidine 244, glutamate 268, cysteine 312, cysteine 403, cysteine 431, cysteine 456, glutamate 491, and lysine 493 each coordinate hybrid [4Fe-2O-2S] cluster. A Cysteine persulfide modification is found at cysteine 403.

This sequence belongs to the HCP family. The cofactor is [4Fe-4S] cluster. It depends on hybrid [4Fe-2O-2S] cluster as a cofactor.

It localises to the cytoplasm. It catalyses the reaction A + NH4(+) + H2O = hydroxylamine + AH2 + H(+). In terms of biological role, catalyzes the reduction of hydroxylamine to form NH(3) and H(2)O. This Clostridium perfringens (strain 13 / Type A) protein is Hydroxylamine reductase.